A 246-amino-acid chain; its full sequence is Pyridoxine 5'-phosphate synthase (246 aa).

Position 12 (N12) interacts with 3-amino-2-oxopropyl phosphate. Residue 14-15 (DH) participates in 1-deoxy-D-xylulose 5-phosphate binding. R23 provides a ligand contact to 3-amino-2-oxopropyl phosphate. The active-site Proton acceptor is the H48. R50 and H55 together coordinate 1-deoxy-D-xylulose 5-phosphate. Catalysis depends on E75, which acts as the Proton acceptor. Residue T105 coordinates 1-deoxy-D-xylulose 5-phosphate. H196 serves as the catalytic Proton donor. Residues G197 and 218–219 (GH) contribute to the 3-amino-2-oxopropyl phosphate site.

It belongs to the PNP synthase family. As to quaternary structure, homooctamer; tetramer of dimers.

It is found in the cytoplasm. The enzyme catalyses 3-amino-2-oxopropyl phosphate + 1-deoxy-D-xylulose 5-phosphate = pyridoxine 5'-phosphate + phosphate + 2 H2O + H(+). It participates in cofactor biosynthesis; pyridoxine 5'-phosphate biosynthesis; pyridoxine 5'-phosphate from D-erythrose 4-phosphate: step 5/5. Functionally, catalyzes the complicated ring closure reaction between the two acyclic compounds 1-deoxy-D-xylulose-5-phosphate (DXP) and 3-amino-2-oxopropyl phosphate (1-amino-acetone-3-phosphate or AAP) to form pyridoxine 5'-phosphate (PNP) and inorganic phosphate. This chain is Pyridoxine 5'-phosphate synthase, found in Pseudomonas putida (strain W619).